A 495-amino-acid polypeptide reads, in one-letter code: Averantin hydroxylase (495 aa).

A helical transmembrane segment spans residues 12-32 (ILLLIVLTVLTPPSLALYRLW). Asn-258 and Asn-289 each carry an N-linked (GlcNAc...) asparagine glycan. Heme is bound at residue Cys-436.

The protein belongs to the cytochrome P450 family. Heme serves as cofactor.

The protein resides in the membrane. It catalyses the reaction (1'S)-averantin + reduced [NADPH--hemoprotein reductase] + O2 = (1'S,5'R)-5'-hydroxyaverantin + oxidized [NADPH--hemoprotein reductase] + H2O. It carries out the reaction (1'S)-averantin + reduced [NADPH--hemoprotein reductase] + O2 = (1'S,5'S)-5'-hydroxyaverantin + oxidized [NADPH--hemoprotein reductase] + H2O + H(+). Its pathway is mycotoxin biosynthesis; aflatoxin biosynthesis. In terms of biological role, averantin hydroxylase; part of the gene cluster that mediates the biosynthesis of aflatoxins, a group of polyketide-derived furanocoumarins, and part of the most toxic and carcinogenic compounds among the known mycotoxins. The four major aflatoxins produced by A.parasiticus are aflatoxin B1 (AFB1), aflatoxin B2 (AFB2), aflatoxin G1 (AFG1) and aflatoxin G2 (AFG2). Within the aflatoxin pathway, the cytochrome P450 monooxygenase aflG catalyzes the hydroxylation of AVN to 5'hydroxyaverantin (HAVN). The biosynthesis of aflatoxins begins with the norsolorinic acid synthase aflC that combines a hexanoyl starter unit produced by the fatty acid synthase aflA/aflB and 7 malonyl-CoA extender units to synthesize the precursor NOR. The second step is the conversion of NOR to averantin and requires the norsolorinic acid ketoreductase aflD, which catalyzes the dehydration of norsolorinic acid to form (1'S)-averantin. The norsolorinic acid reductases aflE and aflF may also play a role in the conversion of NOR to AVN. The cytochrome P450 monooxygenase aflG then catalyzes the hydroxylation of AVN to 5'hydroxyaverantin (HAVN). The next step is performed by the 5'-hydroxyaverantin dehydrogenase aflH that transforms HAVN to 5'-oxoaverantin (OAVN) which is further converted to averufin (AVF) by aflK that plays a dual role in the pathway, as a 5'-oxoaverantin cyclase that mediates conversion of 5'-oxoaverantin, as well as a versicolorin B synthase in a later step in the pathway. The averufin oxidase aflI catalyzes the conversion of AVF to versiconal hemiacetal acetate (VHA). VHA is then the substrate for the versiconal hemiacetal acetate esterase aflJ to yield versiconal (VAL). Versicolorin B synthase aflK then converts VAL to versicolorin B (VERB) by closing the bisfuran ring of aflatoxin which is required for DNA-binding, thus giving to aflatoxin its activity as a mutagen. Then, the activity of the versicolorin B desaturase aflL leads to versicolorin A (VERA). A branch point starts from VERB since it can also be converted to dihydrodemethylsterigmatocystin (DMDHST), probably also by aflL, VERA being a precursor for aflatoxins B1 and G1, and DMDHST for aflatoxins B2 and G2. Next, the versicolorin reductase aflM and the cytochrome P450 monooxygenase aflN are involved in conversion of VERA to demethylsterigmatocystin (DMST). AflX and aflY seem also involved in this step, through probable aflX-mediated epoxide ring-opening step following versicolorin A oxidation and aflY-mediated Baeyer-Villiger oxidation required for the formation of the xanthone ring. The methyltransferase aflO then leads to the modification of DMST to sterigmatocystin (ST), and of DMDHST to dihydrosterigmatocystin (DHST). Both ST and DHST are then substrates of the O-methyltransferase aflP to yield O-methylsterigmatocystin (OMST) and dihydro-O-methylsterigmatocystin (DHOMST), respectively. Finally OMST is converted to aflatoxins B1 and G1, and DHOMST to aflatoxins B2 and G2, via the action of several enzymes including O-methylsterigmatocystin oxidoreductase aflQ, the cytochrome P450 monooxygenase aflU, but also the NADH-dependent flavin oxidoreductase nadA which is specifically required for the synthesis of AFG1. This Aspergillus parasiticus (strain ATCC 56775 / NRRL 5862 / SRRC 143 / SU-1) protein is Averantin hydroxylase.